The following is a 363-amino-acid chain: Fructose-bisphosphate aldolase C (363 aa).

Residue Tyr5 is modified to Phosphotyrosine. Ser36, Ser39, and Ser45 each carry phosphoserine. Arg56 is a binding site for substrate. The residue at position 111 (Lys111) is an N6-acetyllysine. A substrate-binding site is contributed by Lys147. Catalysis depends on Glu188, which acts as the Proton acceptor. Lys230 (schiff-base intermediate with dihydroxyacetone-P) is an active-site residue.

Belongs to the class I fructose-bisphosphate aldolase family. Homotetramer. Interacts with ATP6V1E1. In terms of tissue distribution, expressed exclusively in Purkinje cells in bands running from anterior to posterior across most of the cerebellum. Expressed at higher levels in the brains of BSE-infected animals.

It catalyses the reaction beta-D-fructose 1,6-bisphosphate = D-glyceraldehyde 3-phosphate + dihydroxyacetone phosphate. The protein operates within carbohydrate degradation; glycolysis; D-glyceraldehyde 3-phosphate and glycerone phosphate from D-glucose: step 4/4. This chain is Fructose-bisphosphate aldolase C (Aldoc), found in Mus musculus (Mouse).